A 379-amino-acid polypeptide reads, in one-letter code: Sialidase-2 (379 aa).

Residues tyrosine 20–proline 23 carry the FRIP motif motif. Positions 21 and 41 each coordinate substrate. The active-site Proton acceptor is the aspartate 46. Residues isoleucine 127–alanine 138 form a BNR 1 repeat. The substrate site is built by tyrosine 179 and tyrosine 181. The BNR 2 repeat unit spans residues phenylalanine 197–leucine 208. The substrate site is built by glutamate 218, arginine 237, and arginine 303. Tyrosine 333 serves as the catalytic Nucleophile. Glutamate 354 is a catalytic residue.

The protein belongs to the glycosyl hydrolase 33 family.

The protein resides in the cytoplasm. The catalysed reaction is Hydrolysis of alpha-(2-&gt;3)-, alpha-(2-&gt;6)-, alpha-(2-&gt;8)- glycosidic linkages of terminal sialic acid residues in oligosaccharides, glycoproteins, glycolipids, colominic acid and synthetic substrates.. Catalyzes the removal of sialic acid (N-acetylneuraminic acid) moieties from glycoproteins, oligosaccharides and gangliosides. This is Sialidase-2 (NEU2) from Cricetulus griseus (Chinese hamster).